A 317-amino-acid chain; its full sequence is Gamma-glutamyl hydrolase (317 aa).

A signal peptide spans 1–24 (MANLGYLLCLLGLLLCGLSSPGMS). In terms of domain architecture, Gamma-glutamyl hydrolase spans 25 to 317 (RPYNHGSERP…SSFQQAYMFD (293 aa)). Asn100 is a glycosylation site (N-linked (GlcNAc...) (high mannose) asparagine). The Nucleophile role is filled by Cys133. N-linked (GlcNAc...) (high mannose) asparagine glycans are attached at residues Asn162 and Asn188. The N-linked (GlcNAc...) asparagine glycan is linked to Asn202. The Proton donor role is filled by His243. Residue Asn306 is glycosylated (N-linked (GlcNAc...) asparagine).

Belongs to the peptidase C26 family. As to quaternary structure, homodimer. Isoform I (more expressed than isoform II in all tissues) is highly expressed in salivary gland, followed by kidney, liver, lung, stomach and uterus, and weakly expressed in small intestine, brain and fetal liver. Also expressed at a lower level in thymus, spleen and skeletal muscle. Also expressed in tumors.

It localises to the secreted. Its subcellular location is the extracellular space. The protein resides in the lysosome. The protein localises to the melanosome. The catalysed reaction is (6S)-5,6,7,8-tetrahydrofolyl-(gamma-L-Glu)(n) + (n-1) H2O = (6S)-5,6,7,8-tetrahydrofolate + (n-1) L-glutamate. In terms of biological role, hydrolyzes the polyglutamate sidechains of pteroylpolyglutamates. Progressively removes gamma-glutamyl residues from pteroylpoly-gamma-glutamate to yield pteroyl-alpha-glutamate (folic acid) and free glutamate. May play an important role in the bioavailability of dietary pteroylpolyglutamates and in the metabolism of pteroylpolyglutamates and antifolates. In Mus musculus (Mouse), this protein is Gamma-glutamyl hydrolase (Ggh).